The following is a 295-amino-acid chain: MITELHGIDIRENEPLKHYTYTKVGGPADFLAFPRNHYELSRIVAYANKENMPWLVLGNASNLIVRDGGIRGFVIMFDKLNAVHLNGYTLEAEAGANLIETTKIAKFHSLTGFEFACGIPGSIGGAVFMNAGAYGGEISHIFLSAKVLTPSGEIKTISARDMAFGYRHSAIQETGDIVISAKFALKPGNYDTISQEMNRLNHLRQLKQPLEFPSCGSVFKRPPGHFAGQLIMEANLKGHRIGGVEVSEKHTGFMINVADGTAKDYEDLIAYVIETVENHSGVRLEPEVRIIGENL.

Residues K23–G188 enclose the FAD-binding PCMH-type domain. R167 is a catalytic residue. Residue S217 is the Proton donor of the active site. Residue E287 is part of the active site.

Belongs to the MurB family. FAD is required as a cofactor.

It is found in the cytoplasm. The catalysed reaction is UDP-N-acetyl-alpha-D-muramate + NADP(+) = UDP-N-acetyl-3-O-(1-carboxyvinyl)-alpha-D-glucosamine + NADPH + H(+). It participates in cell wall biogenesis; peptidoglycan biosynthesis. Cell wall formation. In Streptococcus pyogenes serotype M1, this protein is UDP-N-acetylenolpyruvoylglucosamine reductase.